The sequence spans 67 residues: MERLNSKLFVENCYIMKENERLRKKAELLNQENQQLLFQLKQKLSKTKNSNNGSNNDNKSSSASGQS.

A coiled-coil region spans residues Tyr-14 to Lys-59. The disordered stretch occupies residues Gln-42–Ser-67.

As to quaternary structure, interacts with REV. Interacts with ATBH-8, ATBH-9, ATB-14 and ATB-15. In terms of tissue distribution, expressed in the adaxial epidermis of the cotyledons and leaves, and in the vascular cylinder of wild-type torpedo stage embryos. Confined in the central zone and the organizing center in the shoot apical meristem.

The protein localises to the nucleus. Competitive inhibitor of the HD-ZIPIII transcription factors in shoot apical meristem (SAM) development. Acts by forming non-functional heterodimers. Part of a negative feedback loop. Involved in SAM development and lateral organ patterning. Essential for proper functioning of stem cells in the SAM. In Arabidopsis thaliana (Mouse-ear cress), this protein is Protein LITTLE ZIPPER 3.